Here is a 416-residue protein sequence, read N- to C-terminus: UDP-N-acetylglucosamine 1-carboxyvinyltransferase (416 aa).

22–23 (KN) is a binding site for phosphoenolpyruvate. Position 92 (Arg-92) interacts with UDP-N-acetyl-alpha-D-glucosamine. The active-site Proton donor is Cys-116. Cys-116 is modified (2-(S-cysteinyl)pyruvic acid O-phosphothioketal). Residues Asp-304 and Ile-326 each contribute to the UDP-N-acetyl-alpha-D-glucosamine site.

It belongs to the EPSP synthase family. MurA subfamily.

It localises to the cytoplasm. The catalysed reaction is phosphoenolpyruvate + UDP-N-acetyl-alpha-D-glucosamine = UDP-N-acetyl-3-O-(1-carboxyvinyl)-alpha-D-glucosamine + phosphate. Its pathway is cell wall biogenesis; peptidoglycan biosynthesis. Functionally, cell wall formation. Adds enolpyruvyl to UDP-N-acetylglucosamine. The chain is UDP-N-acetylglucosamine 1-carboxyvinyltransferase from Solidesulfovibrio magneticus (strain ATCC 700980 / DSM 13731 / RS-1) (Desulfovibrio magneticus).